The chain runs to 299 residues: T-lymphocyte activation antigen CD80 (299 aa).

An N-terminal signal peptide occupies residues 1-32; the sequence is MGHTLRPGTPLPRCLHLKLCLLLALAGLHFSS. One can recognise an Ig-like V-type domain in the interval 33-131; sequence GISQVTKSVK…NGSFRREHLT (99 aa). Residues 33–243 are Extracellular-facing; sequence GISQVTKSVK…KQEPPIDQLP (211 aa). A disulfide bridge connects residues cysteine 49 and cysteine 115. 7 N-linked (GlcNAc...) asparagine glycosylation sites follow: asparagine 52, asparagine 88, asparagine 97, asparagine 122, asparagine 185, asparagine 206, and asparagine 210. Residues 144–225 form the Ig-like C2-type domain; sequence PSITDIGHPD…LIKYGELSVS (82 aa). A disulfide bridge links cysteine 161 with cysteine 215. Residues 244 to 264 traverse the membrane as a helical segment; that stretch reads FWVIIPVSGALVLTAVVLYCL. The Cytoplasmic portion of the chain corresponds to 265-299; it reads ACRHVARWKRTRRNEETVGTERLSPIYLGSAQSSG.

In terms of assembly, homodimer. Interacts with CTLA4; this interaction inhibits T-cell activation. Interacts with PDL1/CD274; this interaction blocks PDL1/PDCD1 binding and thus PDL1/CD274 inhibitory function. Interacts with CD28.

Its subcellular location is the cell membrane. In terms of biological role, costimulatory molecule that belongs to the immunoglobulin superfamily that plays an important role in T-lymphocyte activation. Acts as the primary auxiliary signal augmenting the MHC/TCR signal in naive T-cells together with the CD28 receptor which is constitutively expressed on the cell surface of T-cells. In turn, activates different signaling pathways such as NF-kappa-B or MAPK leading to the production of different cytokines. In addition, CD28/CD80 costimulatory signal stimulates glucose metabolism and ATP synthesis of T-cells by activating the PI3K/Akt signaling pathway. Also acts as a regulator of PDL1/PDCD1 interactions to limit excess engagement of PDL1 and its inhibitory role in immune responses. Expressed on B-cells, plays a critical role in regulating interactions between B-cells and T-cells in both early and late germinal center responses, which are crucial for the generation of effective humoral immune responses. The chain is T-lymphocyte activation antigen CD80 (CD80) from Oryctolagus cuniculus (Rabbit).